A 67-amino-acid chain; its full sequence is Ubiquinol-cytochrome c reductase complex assembly factor 6 (67 aa).

Over 1-8 the chain is Mitochondrial matrix; the sequence is MPGGVPWS. A helical; Signal-anchor for type II membrane protein membrane pass occupies residues 9–25; sequence AYLKMLSSSLLAMCAGA. At 26-67 the chain is on the mitochondrial intermembrane side; sequence QVVHWYYRPDLTIPEIPPKPGELKTELLGLKERRHEPHVSQQ.

The protein belongs to the UQCC6 family. In terms of assembly, interacts with UQCRC1. Interacts with UQCRQ. Interacts with UQCC5. Forms a complex, named COMB/coordinator of mitochondrial CYTB biogenesis, composed of UQCC1, UQCC2, UQCC4, UQCC5 and UQCC6; stabilizes nascent cytochrome b/MT-CYB and promotes its membrane insertion. Forms a complex, named COMA, composed of UQCC1, UQCC2 and UQCC4; activates MT-CYB translation. Forms a complex, named COMC, composed of UQCC1, UQCC2; UQCC3 and UQCC4; mediates MT-CYB hemylation and association with the first nuclear-encoded complex III subunit UQCRQ. Interacts with MT-CYB. In terms of tissue distribution, highly expressed in brown adipose, cardiac and skeletal muscle (at protein level).

The protein localises to the mitochondrion inner membrane. Required for the assembly and stability of the mitochondrial ubiquinol-cytochrome c reductase complex (complex III or cytochrome b-c1 complex), a multisubunit transmembrane complex that is part of the mitochondrial electron transport chain (ETC) which drives oxidative phosphorylation. Mediates early complex III biogenesis. Participates in regulating the levels of electron transport chain proteins, and therefore energy supply, in response to changes in energy demand. Also required for cytochrome c oxidase complex (complex IV) assembly. The chain is Ubiquinol-cytochrome c reductase complex assembly factor 6 from Mus musculus (Mouse).